Consider the following 238-residue polypeptide: Ribonuclease PH (238 aa).

Phosphate contacts are provided by residues R86 and G124–R126.

This sequence belongs to the RNase PH family. Homohexameric ring arranged as a trimer of dimers.

It catalyses the reaction tRNA(n+1) + phosphate = tRNA(n) + a ribonucleoside 5'-diphosphate. Functionally, phosphorolytic 3'-5' exoribonuclease that plays an important role in tRNA 3'-end maturation. Removes nucleotide residues following the 3'-CCA terminus of tRNAs; can also add nucleotides to the ends of RNA molecules by using nucleoside diphosphates as substrates, but this may not be physiologically important. Probably plays a role in initiation of 16S rRNA degradation (leading to ribosome degradation) during starvation. The polypeptide is Ribonuclease PH (Maricaulis maris (strain MCS10) (Caulobacter maris)).